The sequence spans 144 residues: Large ribosomal subunit protein uL15 (144 aa).

A disordered region spans residues 1 to 52; that stretch reads MRLNSLSPAEGAKHSAKRLGRGISSGLGKTGGRGHKGQKSRTGGGVRRGFEG.

It belongs to the universal ribosomal protein uL15 family. In terms of assembly, part of the 50S ribosomal subunit.

Functionally, binds to the 23S rRNA. The sequence is that of Large ribosomal subunit protein uL15 from Actinobacillus pleuropneumoniae serotype 7 (strain AP76).